The primary structure comprises 916 residues: DNA mismatch repair protein MutS (916 aa).

ATP is bound at residue 665–672; the sequence is GPNMAGKS.

It belongs to the DNA mismatch repair MutS family.

In terms of biological role, this protein is involved in the repair of mismatches in DNA. It is possible that it carries out the mismatch recognition step. This protein has a weak ATPase activity. This Bradyrhizobium sp. (strain ORS 278) protein is DNA mismatch repair protein MutS.